Here is a 493-residue protein sequence, read N- to C-terminus: Galactose-1-phosphate uridylyltransferase (493 aa).

It belongs to the galactose-1-phosphate uridylyltransferase type 2 family.

The protein localises to the cytoplasm. The enzyme catalyses alpha-D-galactose 1-phosphate + UDP-alpha-D-glucose = alpha-D-glucose 1-phosphate + UDP-alpha-D-galactose. The protein operates within carbohydrate metabolism; galactose metabolism. The protein is Galactose-1-phosphate uridylyltransferase (galT) of Lactococcus lactis subsp. lactis (strain IL1403) (Streptococcus lactis).